Here is a 914-residue protein sequence, read N- to C-terminus: Scaffold attachment factor B1 (914 aa).

The span at 1–24 (MAETLSGLGDSGAAGAAALSSASS) shows a compositional bias: low complexity. The tract at residues 1–33 (MAETLSGLGDSGAAGAAALSSASSETGTRRLSD) is disordered. N-acetylalanine is present on Ala-2. Phosphoserine occurs at positions 24 and 55. Positions 31–65 (LSDLRVIDLRAELRKRNVDSSGNKSVLMERLKKAI) constitute an SAP domain. The segment at 64 to 117 (AIEDEGGNPDEIEITSEGNKKTSKRSSKGRKPEEEGVEDNGLEENSGDGQEDVE) is disordered. Residues 67-77 (DEGGNPDEIEI) show a composition bias toward acidic residues. Phosphoserine is present on Ser-79. Acidic residues predominate over residues 98-117 (EGVEDNGLEENSGDGQEDVE). Residues Lys-172 and Lys-186 each participate in a glycyl lysine isopeptide (Lys-Gly) (interchain with G-Cter in SUMO2) cross-link. Thr-188 bears the Phosphothreonine mark. Phosphoserine occurs at positions 195, 197, and 209. The segment at 221–407 (LGETCKSEPV…EKGRSSCGRN (187 aa)) is disordered. Basic and acidic residues predominate over residues 225 to 234 (CKSEPVKEES). Residue Lys-231 forms a Glycyl lysine isopeptide (Lys-Gly) (interchain with G-Cter in SUMO) linkage. Over residues 275-286 (SESTAHAQSSKA) the composition is skewed to polar residues. Residues 293–309 (VKREPAEQPGDGERTDC) are compositionally biased toward basic and acidic residues. Lys-294 is covalently cross-linked (Glycyl lysine isopeptide (Lys-Gly) (interchain with G-Cter in SUMO)). Low complexity predominate over residues 319–330 (EQSSAASELAEA). Residues 346–359 (EARDSKEDGRKFDF) are compositionally biased toward basic and acidic residues. Residues 371–383 (ESSTSEGADQKMS) are compositionally biased toward polar residues. A Glycyl lysine isopeptide (Lys-Gly) (interchain with G-Cter in SUMO2) cross-link involves residue Lys-381. Ser-383 and Ser-384 each carry phosphoserine. The span at 390–401 (DTKRLSKEEKGR) shows a compositional bias: basic and acidic residues. Residue Lys-392 forms a Glycyl lysine isopeptide (Lys-Gly) (interchain with G-Cter in SUMO2) linkage. The RRM domain maps to 406–484 (RNFWVSGLSS…KMISVEKAKN (79 aa)). Ser-415 carries the phosphoserine modification. 2 stretches are compositionally biased toward basic and acidic residues: residues 477 to 551 (ISVE…ERSR) and 559 to 570 (GTERTVVMDKSK). Disordered regions lie at residues 477-636 (ISVE…QAQW), 670-706 (RERM…QERR), and 748-914 (FDHR…TRRY). Residues Lys-483, Lys-514, Lys-543, and Lys-570 each participate in a glycyl lysine isopeptide (Lys-Gly) (interchain with G-Cter in SUMO2) cross-link. The tract at residues 528–791 (GDDGSGEKSK…RHGGPERHGR (264 aa)) is interaction with POLR2A; SFRS1; SFRS9 and SFRS10. A Glycyl lysine isopeptide (Lys-Gly) (interchain with G-Cter in SUMO1); alternate cross-link involves residue Lys-578. Lys-578 is covalently cross-linked (Glycyl lysine isopeptide (Lys-Gly) (interchain with G-Cter in SUMO2); alternate). 4 positions are modified to phosphoserine: Ser-580, Ser-582, Ser-601, and Ser-604. The segment covering 581 to 636 (GSKERASKSLDRKSASREKRSVVSFDKVKEPRKSRDSESHRVRERSEREQRMQAQW) has biased composition (basic and acidic residues). The Nuclear localization signal motif lies at 599–616 (KRSVVSFDKVKEPRKSRD). The segment at 599–914 (KRSVVSFDKV…PSDARFTRRY (316 aa)) is interaction with SAFB2. Lys-607 carries the post-translational modification N6-acetyllysine. Positions 748 to 795 (FDHRDRGRYPDHSVDRREGSRSMMGEREGQHYPERHGGPERHGRDSRD) are enriched in basic and acidic residues. Arg-810 is subject to Omega-N-methylarginine. Basic and acidic residues-rich tracts occupy residues 816-831 (PRRD…DDRA) and 840-850 (MMDRDHKRWQG). Residue Lys-846 forms a Glycyl lysine isopeptide (Lys-Gly) (interchain with G-Cter in SUMO2) linkage. Residues Arg-867, Arg-873, and Arg-883 each carry the asymmetric dimethylarginine modification. Positions 891–900 (GMQGGFGGQS) are enriched in gly residues. Residues 904-914 (RPSDARFTRRY) show a composition bias toward basic and acidic residues.

Monomer and homodimer. Interacts with KHDRBS3. Interacts with CLK2. Interacts with POLR2A, ASF/SRSF1, SRp30c/SRFS9 and TRA2B/SFRS10. Interacts with SRPK1 and inhibits its activity. Interacts with RBMX. Interacts with FUS. Interacts with ZBED4. Post-translationally, sumoylated by PIAS1 with SUMO1 and SUMO2/3, desumoylated by SENP1. Sumoylation is required for transcriptional repressor activity.

Its subcellular location is the nucleus. Its function is as follows. Binds to scaffold/matrix attachment region (S/MAR) DNA and forms a molecular assembly point to allow the formation of a 'transcriptosomal' complex (consisting of SR proteins and RNA polymerase II) coupling transcription and RNA processing. Functions as an estrogen receptor corepressor and can also bind to the HSP27 promoter and decrease its transcription. Thereby acts as a negative regulator of cell proliferation. When associated with RBMX, binds to and stimulates transcription from the SREBF1 promoter. The chain is Scaffold attachment factor B1 (SAFB) from Pongo abelii (Sumatran orangutan).